Consider the following 280-residue polypeptide: Eukaryotic translation initiation factor 3 subunit F-1 (280 aa).

In terms of domain architecture, MPN spans 8-138 (VRVHPVVLFQ…LRAYVCIQLG (131 aa)).

This sequence belongs to the eIF-3 subunit F family. As to quaternary structure, component of the eukaryotic translation initiation factor 3 (eIF-3) complex. The eIF-3 complex interacts with pix.

The protein localises to the cytoplasm. In terms of biological role, component of the eukaryotic translation initiation factor 3 (eIF-3) complex, which is involved in protein synthesis of a specialized repertoire of mRNAs and, together with other initiation factors, stimulates binding of mRNA and methionyl-tRNAi to the 40S ribosome. The eIF-3 complex specifically targets and initiates translation of a subset of mRNAs involved in cell proliferation. The chain is Eukaryotic translation initiation factor 3 subunit F-1 from Drosophila yakuba (Fruit fly).